We begin with the raw amino-acid sequence, 414 residues long: MTQANLSETLFKPRFKHPETSTLVRRFNHGAQPPVQSALDGKTIPHWYRMINRLMWIWRGIDPREILDVQARIVMSDAERTDDDLYDTVIGYRGGNWIYEWATQAMVWQQKACAEEDPQLSGRHWLHAATLYNIAAYPHLKGDDLAEQAQALSNRAYEEAAQRLPGTMRQMEFTVPGGAPITGFLHMPKGDGPFPTVLMCGGLDAMQTDYYSLYERYFAPRGIAMLTIDMPSVGFSSKWKLTQDSSLLHQHVLKALPNVPWVDHTRVAAFGFRFGANVAVRLAYLESPRLKAVACLGPVVHTLLSDFKCQQQVPEMYLDVLASRLGMHDASDEALRVELNRYSLKVQGLLGRRCPTPMLSGYWKNDPFSPEEDSRLITSSSADGKLLEIPFNPVYRNFDKGLQEITGWIEKRLC.

It belongs to the FrsA family.

It catalyses the reaction a carboxylic ester + H2O = an alcohol + a carboxylate + H(+). In terms of biological role, catalyzes the hydrolysis of esters. The sequence is that of Esterase FrsA from Escherichia coli O8 (strain IAI1).